Consider the following 306-residue polypeptide: MVHVRKNHLTMTAEEKRRFVHAVLEIKRRGIYDRFVKLHIQINSTDYLDKETGKRLGHVNPGFLPWHRQYLLKFEQALQKVDPRVTLPYWDWTTDHGENSPLWSDTFMGGNGRPGDRRVMTGPFARRNGWKLNISVIPEGPEDPALNGNYTHDDRDYLVRDFGTLTPDLPTPQELEQTLDLTVYDCPPWNHTSGGTPPYESFRNHLEGYTKFAWEPRLGKLHGAAHVWTGGHMMYIGSPNDPVFFLNHCMIDRCWALWQARHPDVPHYLPTVPTQDVPDLNTPLGPWHTKTPADLLDHTRFYTYDQ.

Residues His-39, His-58, His-67, His-222, His-226, and His-248 each coordinate Cu(2+).

It belongs to the tyrosinase family. Cu(2+) serves as cofactor.

The catalysed reaction is 2 3-amino-4-hydroxybenzoate + N-acetyl-L-cysteine + 2 O2 + H(+) = grixazone B + CO2 + 4 H2O. It catalyses the reaction 2 3-amino-4-hydroxybenzaldehyde + N-acetyl-L-cysteine + 2 O2 = grixazone A + formate + 3 H2O + H(+). It carries out the reaction 4 2-aminophenol + 3 O2 = 2 2-aminophenoxazin-3-one + 6 H2O. With respect to regulation, inhibited by 3-amino-4-hydroxybenzensulfonic acid, 4-hydroxy-3-nitrobenzaldehyde, L-tyrosine, p-hydroxybenzaldehyde. Activated by the copper chaperone GriE. In terms of biological role, involved in the biosynthesis of the parasiticide antibiotic grixazone. Catalyzes the oxidation of 3-amino-4-hydroxybenzoate (3,4-AHBOA) to yield the corresponding quinone imine which is then non-enzymatically conjugated with the thiol group of N-acetylcysteine. The resultant compound is oxidized to its quinone imine enzymatically and is then dimerized non-enzymatically with another quinone imine oxidized by GriF to yield grixazone B. 3-amino-4-hydroxybenzaldehyde (3,4-AHBAL) can also be used as substrate to yield grixazone A. In the grixazone biosynthetic pathway, it can also function as an o-aminophenol oxidase that catalyzes the formation of the phenoxazinone chromophore from alpha-aminophenol. It can also use 2-amino-4-methylphenol, and to a lesser extent, 3,4-dihydroxybenzaldehyde, catechol and 3,4-dihydroxy-L-phenylalanine (L-DOPA) as substrates. In contrast to tyrosinases, it does not display monophenolase activity. In Streptomyces griseus subsp. griseus (strain JCM 4626 / CBS 651.72 / NBRC 13350 / KCC S-0626 / ISP 5235), this protein is Grixazone synthase.